A 390-amino-acid chain; its full sequence is Flap endonuclease 1-1 (390 aa).

The interval 1 to 108 (MGIHQLMQFL…GELARRKKLK (108 aa)) is N-domain. Mg(2+) is bound at residue Asp-34. Arg-74 is a DNA binding site. Mg(2+) is bound by residues Asp-90, Glu-162, Glu-164, Asp-183, and Asp-185. The segment at 126–254 (QALLQHQRTT…GTAYKLIKEF (129 aa)) is I-domain. DNA is bound at residue Glu-162. Positions 232 and 234 each coordinate DNA. Asp-234 is a Mg(2+) binding site. The segment at 348 to 356 (FQSRLENFF) is interaction with PCNA. Residues 359 to 390 (TTKIIHPNNSKAKGKANKKNEQTQKSGGKKKI) form a disordered region.

Belongs to the XPG/RAD2 endonuclease family. FEN1 subfamily. Interacts with PCNA. Three molecules of FEN1 bind to one PCNA trimer with each molecule binding to one PCNA monomer. PCNA stimulates the nuclease activity without altering cleavage specificity. Requires Mg(2+) as cofactor. Phosphorylated. Phosphorylation upon DNA damage induces relocalization to the nuclear plasma.

The protein resides in the nucleus. It is found in the nucleolus. Its subcellular location is the nucleoplasm. It localises to the mitochondrion. Structure-specific nuclease with 5'-flap endonuclease and 5'-3' exonuclease activities involved in DNA replication and repair. During DNA replication, cleaves the 5'-overhanging flap structure that is generated by displacement synthesis when DNA polymerase encounters the 5'-end of a downstream Okazaki fragment. It enters the flap from the 5'-end and then tracks to cleave the flap base, leaving a nick for ligation. Also involved in the long patch base excision repair (LP-BER) pathway, by cleaving within the apurinic/apyrimidinic (AP) site-terminated flap. Acts as a genome stabilization factor that prevents flaps from equilibrating into structures that lead to duplications and deletions. Also possesses 5'-3' exonuclease activity on nicked or gapped double-stranded DNA, and exhibits RNase H activity. Also involved in replication and repair of rDNA and in repairing mitochondrial DNA. The polypeptide is Flap endonuclease 1-1 (Paramecium tetraurelia).